We begin with the raw amino-acid sequence, 157 residues long: Transcription elongation factor GreA (157 aa).

Residues 14–37 are a coiled coil; sequence LREELDRLLKLRPKITEAIAEARE.

It belongs to the GreA/GreB family.

Functionally, necessary for efficient RNA polymerase transcription elongation past template-encoded arresting sites. The arresting sites in DNA have the property of trapping a certain fraction of elongating RNA polymerases that pass through, resulting in locked ternary complexes. Cleavage of the nascent transcript by cleavage factors such as GreA or GreB allows the resumption of elongation from the new 3'terminus. GreA releases sequences of 2 to 3 nucleotides. The protein is Transcription elongation factor GreA of Vibrio cholerae serotype O1 (strain ATCC 39315 / El Tor Inaba N16961).